A 141-amino-acid chain; its full sequence is Ly6/PLAUR domain-containing protein 1 (141 aa).

An N-terminal signal peptide occupies residues methionine 1–alanine 20. Intrachain disulfides connect cysteine 25-cysteine 54, cysteine 28-cysteine 37, cysteine 46-cysteine 71, cysteine 77-cysteine 100, cysteine 88-cysteine 97, and cysteine 101-cysteine 106. One can recognise a UPAR/Ly6 domain in the interval cysteine 25–glycine 108. An N-linked (GlcNAc...) asparagine glycan is attached at asparagine 45. A lipid anchor (GPI-anchor amidated glycine) is attached at glycine 115. A propeptide spans serine 116–cysteine 141 (removed in mature form).

As to quaternary structure, interacts with CHRNA4 and nAChRs containing alpha-4:beta-2 (CHRNA4:CHRNB2) and alpha-7 (CHRNA7) subunits.

Its subcellular location is the cell membrane. Functionally, believed to act as a modulator of nicotinic acetylcholine receptors (nAChRs) activity. In vitro increases receptor desensitization and decreases affinity for ACh of alpha-4:beta-2-containing nAChRs. May play a role in the intracellular trafficking of alpha-4:beta-2 and alpha-7-containing nAChRs and may inhibit their expression at the cell surface. May be involved in the control of anxiety. This is Ly6/PLAUR domain-containing protein 1 (Lypd1) from Rattus norvegicus (Rat).